Consider the following 296-residue polypeptide: Phosphatidylglycerol--prolipoprotein diacylglyceryl transferase (296 aa).

The next 4 membrane-spanning stretches (helical) occupy residues 10-30, 57-77, 92-112, and 119-139; these read IAFS…LAAF, LLFY…MLFY, VWEG…ACGL, and LHFF…LGFG. Arg-140 provides a ligand contact to a 1,2-diacyl-sn-glycero-3-phospho-(1'-sn-glycerol). Transmembrane regions (helical) follow at residues 194–214, 220–240, and 255–275; these read QLYE…TFSM, YAVS…VEFV, and LTMG…LLAL.

The protein belongs to the Lgt family.

The protein localises to the cell inner membrane. The enzyme catalyses L-cysteinyl-[prolipoprotein] + a 1,2-diacyl-sn-glycero-3-phospho-(1'-sn-glycerol) = an S-1,2-diacyl-sn-glyceryl-L-cysteinyl-[prolipoprotein] + sn-glycerol 1-phosphate + H(+). It participates in protein modification; lipoprotein biosynthesis (diacylglyceryl transfer). In terms of biological role, catalyzes the transfer of the diacylglyceryl group from phosphatidylglycerol to the sulfhydryl group of the N-terminal cysteine of a prolipoprotein, the first step in the formation of mature lipoproteins. The polypeptide is Phosphatidylglycerol--prolipoprotein diacylglyceryl transferase (Xanthomonas campestris pv. campestris (strain 8004)).